A 284-amino-acid polypeptide reads, in one-letter code: MLTLLAPAKVNLSLEVLYRRKDGYHELRSIIQSLSLCDRLSFSPSKTVHISSDSQDWQADLSLVSKAVELFSERCGQNTGVNLKIAKRIPLVSGLGGDSSCAAAVLKGLNKLWGCGYPCWRLMEIGAELGSDVPFFIMGGTAMMEGRGETVTPLPTLTQMWAVLLVPALDMPADKTAALYRNLRPDSFTSGEISDKLLESICQGKLSLSLCFNAFEKVAFELFPELVKYRWQFLEAGAYQISLAGAGPTLFTLLKDKNTAEKIYHNLCQKGHQAYLVSTLGPLD.

Lysine 9 is an active-site residue. 90–100 (PLVSGLGGDSS) contributes to the ATP binding site. Aspartate 132 is a catalytic residue.

Belongs to the GHMP kinase family. IspE subfamily.

The catalysed reaction is 4-CDP-2-C-methyl-D-erythritol + ATP = 4-CDP-2-C-methyl-D-erythritol 2-phosphate + ADP + H(+). It functions in the pathway isoprenoid biosynthesis; isopentenyl diphosphate biosynthesis via DXP pathway; isopentenyl diphosphate from 1-deoxy-D-xylulose 5-phosphate: step 3/6. Functionally, catalyzes the phosphorylation of the position 2 hydroxy group of 4-diphosphocytidyl-2C-methyl-D-erythritol. This Dehalococcoides mccartyi (strain ATCC BAA-2100 / JCM 16839 / KCTC 5957 / BAV1) protein is 4-diphosphocytidyl-2-C-methyl-D-erythritol kinase.